Here is a 296-residue protein sequence, read N- to C-terminus: MQDRFVHCIAQLPQPLADQLVPLLNQDFVGHMDAQQVADLAAATQMSQDELLLALLPIAAALAKPPISEFYVGAIAKGASGDIYMGANLELDGEALFHSVHAEQSAISHAWLSGETGIEDIIVNASPCGHCRQFMNELVEGQAIRIHLPEQATQPLSHYLPYAFGPADLNIKTPLLSKQQHEFTLESADPMIIEALDHLSLSYAPYSESYAAVVLETRDGATFCGRYAENAAFNPSMLPMQMALSAMARHNRDFSEINRAVLIESSQGKISLVGATMDALHAVAAVELEHIMVDPV.

CMP/dCMP-type deaminase domains are found at residues 47–167 (SQDE…FGPA) and 186–296 (ESAD…VDPV). A substrate-binding site is contributed by 88–90 (NLE). His-101 contacts Zn(2+). The Proton donor role is filled by Glu-103. 2 residues coordinate Zn(2+): Cys-128 and Cys-131.

It belongs to the cytidine and deoxycytidylate deaminase family. In terms of assembly, homodimer. It depends on Zn(2+) as a cofactor.

It catalyses the reaction cytidine + H2O + H(+) = uridine + NH4(+). The enzyme catalyses 2'-deoxycytidine + H2O + H(+) = 2'-deoxyuridine + NH4(+). In terms of biological role, this enzyme scavenges exogenous and endogenous cytidine and 2'-deoxycytidine for UMP synthesis. The protein is Cytidine deaminase of Shewanella loihica (strain ATCC BAA-1088 / PV-4).